Reading from the N-terminus, the 334-residue chain is Ketol-acid reductoisomerase (NADP(+)) (334 aa).

The KARI N-terminal Rossmann domain occupies 1 to 181 (MTTVYYDQDV…GATRAGVIET (181 aa)). NADP(+) is bound by residues 25–28 (YGSQ), Arg48, Ser52, and 82–85 (DEIQ). Residue His107 is part of the active site. Gly133 serves as a coordination point for NADP(+). One can recognise a KARI C-terminal knotted domain in the interval 182-327 (TFKEETETDL…RELREMMPFI (146 aa)). Residues Asp190, Glu194, Glu226, and Glu230 each coordinate Mg(2+). Residue Ser251 participates in substrate binding.

The protein belongs to the ketol-acid reductoisomerase family. The cofactor is Mg(2+).

The catalysed reaction is (2R)-2,3-dihydroxy-3-methylbutanoate + NADP(+) = (2S)-2-acetolactate + NADPH + H(+). The enzyme catalyses (2R,3R)-2,3-dihydroxy-3-methylpentanoate + NADP(+) = (S)-2-ethyl-2-hydroxy-3-oxobutanoate + NADPH + H(+). The protein operates within amino-acid biosynthesis; L-isoleucine biosynthesis; L-isoleucine from 2-oxobutanoate: step 2/4. It participates in amino-acid biosynthesis; L-valine biosynthesis; L-valine from pyruvate: step 2/4. Its function is as follows. Involved in the biosynthesis of branched-chain amino acids (BCAA). Catalyzes an alkyl-migration followed by a ketol-acid reduction of (S)-2-acetolactate (S2AL) to yield (R)-2,3-dihydroxy-isovalerate. In the isomerase reaction, S2AL is rearranged via a Mg-dependent methyl migration to produce 3-hydroxy-3-methyl-2-ketobutyrate (HMKB). In the reductase reaction, this 2-ketoacid undergoes a metal-dependent reduction by NADPH to yield (R)-2,3-dihydroxy-isovalerate. The chain is Ketol-acid reductoisomerase (NADP(+)) from Staphylococcus aureus (strain USA300).